We begin with the raw amino-acid sequence, 354 residues long: 5,10-methenyltetrahydromethanopterin hydrogenase (354 aa).

This sequence belongs to the HMD family.

The catalysed reaction is 5,10-methenyl-5,6,7,8-tetrahydromethanopterin + H2 = 5,10-methylenetetrahydromethanopterin + H(+). It participates in one-carbon metabolism; methanogenesis from CO(2); 5,10-methylene-5,6,7,8-tetrahydromethanopterin from 5,10-methenyl-5,6,7,8-tetrahydromethanopterin (hydrogen route): step 1/1. Catalyzes the reversible reduction of methenyl-H(4)MPT(+) to methylene-H(4)MPT. In Methanococcus maripaludis (strain C5 / ATCC BAA-1333), this protein is 5,10-methenyltetrahydromethanopterin hydrogenase.